The primary structure comprises 196 residues: uncharacterized protein (196 aa).

This is an uncharacterized protein from Saccharolobus islandicus (Sulfolobus islandicus).